Reading from the N-terminus, the 118-residue chain is Ribulose bisphosphate carboxylase small subunit (118 aa).

It belongs to the RuBisCO small chain family. In terms of assembly, heterohexadecamer of 8 large and 8 small subunits.

It is found in the carboxysome. RuBisCO catalyzes two reactions: the carboxylation of D-ribulose 1,5-bisphosphate, the primary event in carbon dioxide fixation, as well as the oxidative fragmentation of the pentose substrate in the photorespiration process. Both reactions occur simultaneously and in competition at the same active site. Although the small subunit is not catalytic it is essential for maximal activity. In Thermosynechococcus vestitus (strain NIES-2133 / IAM M-273 / BP-1), this protein is Ribulose bisphosphate carboxylase small subunit.